The primary structure comprises 417 residues: CinA-like protein (417 aa).

It belongs to the CinA family.

The polypeptide is CinA-like protein (Microcystis aeruginosa (strain NIES-843 / IAM M-2473)).